We begin with the raw amino-acid sequence, 279 residues long: Diaminopimelate epimerase (279 aa).

Substrate is bound by residues N13 and N66. C75 functions as the Proton donor in the catalytic mechanism. Substrate is bound by residues 76–77 (GN), N164, N197, and 215–216 (ER). The active-site Proton acceptor is the C224. 225–226 (GT) is a substrate binding site.

This sequence belongs to the diaminopimelate epimerase family. As to quaternary structure, homodimer.

It is found in the cytoplasm. It carries out the reaction (2S,6S)-2,6-diaminopimelate = meso-2,6-diaminopimelate. It participates in amino-acid biosynthesis; L-lysine biosynthesis via DAP pathway; DL-2,6-diaminopimelate from LL-2,6-diaminopimelate: step 1/1. Functionally, catalyzes the stereoinversion of LL-2,6-diaminopimelate (L,L-DAP) to meso-diaminopimelate (meso-DAP), a precursor of L-lysine and an essential component of the bacterial peptidoglycan. The polypeptide is Diaminopimelate epimerase (Nostoc punctiforme (strain ATCC 29133 / PCC 73102)).